A 61-amino-acid polypeptide reads, in one-letter code: uncharacterized protein (61 aa).

This sequence belongs to the DUP/COS family.

This is an uncharacterized protein from Saccharomyces cerevisiae (strain ATCC 204508 / S288c) (Baker's yeast).